We begin with the raw amino-acid sequence, 302 residues long: MSEPAQEYRLVLVTGPSGAGRTTAVNALEDMGYEVIDNLPLSFVPRLIEGPAIGPPIALGLDVRNRDFNATALIELIDGLTQDARVQLEVLYVDCSASELIRRYSQTRRRHPLAPAETPAEGVEREIDLLAPVRARADHLIDTSEMSPHDLKAELARWFDRGAATRLAVSVQSFSYKRGVPRGVDMIFDCRFLRNPYWVESLRALDGRDAAVEDYIRSDPRFAPFLEKLRELVLFLLPAQLEEGKAHLSIGFGCTGGQHRSVAVAEILGKALAEAGWPVSKRHRELERRAAAVLPTHQGEKA.

15-22 (GPSGAGRT) contributes to the ATP binding site. Position 62–65 (62–65 (DVRN)) interacts with GTP.

The protein belongs to the RapZ-like family.

Functionally, displays ATPase and GTPase activities. This is Nucleotide-binding protein Rsph17025_2562 from Cereibacter sphaeroides (strain ATCC 17025 / ATH 2.4.3) (Rhodobacter sphaeroides).